The following is a 514-amino-acid chain: MSLTEEIKKRRTFAIISHPDAGKTTITEQLLYFGGEIREAGTVKGKKSGTFAKSDWMDIEKQRGISVTSSVMQFDYAGKRVNILDTPGHEDFSEDTYRTLMAVDAAVMVVDSAKGIEAQTKKLFEVVKHRNIPVFTFINKLDRDGREPLELLEELEEVLGIASYPMNWPIGMGRAFEGLYDLHNKRLELYKGDERFASIEDGDQLFTNNPFYEQVKEDIELLQEAGNDFSEQAILDGDLTPVFFGSALTNFGVQTFLDTFLEFAPEPHGHKTTEGNVVDPLAKDFSGFVFKIQANMDPKHRDRIAFVRIVSGEFERGMGVNLTRTGKGAKLSNVTQFMAESRENVTNAVAGDIIGVYDTGTYQVGDTLTVGKNKFEFEPLPTFTPEIFMKVSPKNVMKQKSFHKGIEQLVQEGAIQLYKNYQTGEYMLGAVGQLQFEVFKHRMEGEYNAEVVMTPMGKKTVRWISEDDLDQRMSSSRNILAKDRFDQPVFLFENDFALRWFADKYPDVTLEEKM.

In terms of domain architecture, tr-type G spans 8–268; that stretch reads KKRRTFAIIS…TFLEFAPEPH (261 aa). Residues 17-24, 85-89, and 139-142 contribute to the GTP site; these read SHPDAGKT, DTPGH, and NKLD.

It belongs to the TRAFAC class translation factor GTPase superfamily. Classic translation factor GTPase family. PrfC subfamily.

The protein resides in the cytoplasm. Functionally, increases the formation of ribosomal termination complexes and stimulates activities of RF-1 and RF-2. It binds guanine nucleotides and has strong preference for UGA stop codons. It may interact directly with the ribosome. The stimulation of RF-1 and RF-2 is significantly reduced by GTP and GDP, but not by GMP. The protein is Peptide chain release factor 3 of Streptococcus pyogenes serotype M5 (strain Manfredo).